The sequence spans 1333 residues: ABC transporter ATP-binding protein/permease PDR18 (1333 aa).

The chain crosses the membrane as a helical span at residues 13–33 (FLEGQTFGDILCLPWTIIKGI). The region spanning 30-281 (IKGIRERKNR…FENMGYLCPP (252 aa)) is the ABC transporter 1 domain. 4 N-linked (GlcNAc...) asparagine glycosylation sites follow: N48, N144, N205, and N350. A run of 6 helical transmembrane segments spans residues 392–412 (YTVINTCAAIAQAFITGSLFY), 425–445 (SGVLFFSLLYYSLMGLANISF), 474–494 (FPFRMIGLTFFIIILYFLAGL), 499–519 (GAFFTMYLLLTMCSEAITSLF), 534–554 (SIAGVVMLSIAMYSTYMIQLP), and 642–662 (FGIMWCFLIGYIVLRAVFTEY). N-linked (GlcNAc...) asparagine glycosylation is found at N697 and N733. Positions 729–971 (FIWKNVSFTI…VIKYFEKNGA (243 aa)) constitute an ABC transporter 2 domain. 765-772 (GESGAGKT) lines the ATP pocket. N958 is a glycosylation site (N-linked (GlcNAc...) asparagine). The next 6 membrane-spanning stretches (helical) occupy residues 1071–1091 (LLMISGLFIGFTFFHVGVNAI), 1092–1112 (GLQNSLFACFMAIVISAPATN), 1150–1170 (PYHLLFSTIFFVSSYFPLGVF), 1178–1198 (VFYLNYAILFQLYYIGLALMI), 1210–1230 (VIVGFILSFLLSFCGAVQPAS), and 1235–1255 (FWTFMWKLSPYTYFLQNLVGL). An N-linked (GlcNAc...) asparagine glycan is attached at N1320.

This sequence belongs to the ABC transporter superfamily. ABCG family. PDR (TC 3.A.1.205) subfamily.

The protein resides in the membrane. This is ABC transporter ATP-binding protein/permease PDR18 (PDR18) from Saccharomyces cerevisiae (strain ATCC 204508 / S288c) (Baker's yeast).